Consider the following 400-residue polypeptide: NADH-quinone oxidoreductase subunit D (400 aa).

The protein belongs to the complex I 49 kDa subunit family. In terms of assembly, NDH-1 is composed of 14 different subunits. Subunits NuoB, C, D, E, F, and G constitute the peripheral sector of the complex.

Its subcellular location is the cell inner membrane. The catalysed reaction is a quinone + NADH + 5 H(+)(in) = a quinol + NAD(+) + 4 H(+)(out). Functionally, NDH-1 shuttles electrons from NADH, via FMN and iron-sulfur (Fe-S) centers, to quinones in the respiratory chain. The immediate electron acceptor for the enzyme in this species is believed to be a menaquinone. Couples the redox reaction to proton translocation (for every two electrons transferred, four hydrogen ions are translocated across the cytoplasmic membrane), and thus conserves the redox energy in a proton gradient. The protein is NADH-quinone oxidoreductase subunit D of Chlorobium chlorochromatii (strain CaD3).